Here is a 380-residue protein sequence, read N- to C-terminus: 3-isopropylmalate dehydratase large subunit (380 aa).

Residues Cys262, Cys320, and Cys323 each contribute to the [4Fe-4S] cluster site.

It belongs to the aconitase/IPM isomerase family. LeuC type 2 subfamily. Heterodimer of LeuC and LeuD. It depends on [4Fe-4S] cluster as a cofactor.

It carries out the reaction (2R,3S)-3-isopropylmalate = (2S)-2-isopropylmalate. It participates in amino-acid biosynthesis; L-leucine biosynthesis; L-leucine from 3-methyl-2-oxobutanoate: step 2/4. Catalyzes the isomerization between 2-isopropylmalate and 3-isopropylmalate, via the formation of 2-isopropylmaleate. This Pyrococcus horikoshii (strain ATCC 700860 / DSM 12428 / JCM 9974 / NBRC 100139 / OT-3) protein is 3-isopropylmalate dehydratase large subunit.